We begin with the raw amino-acid sequence, 135 residues long: UPF0299 membrane protein ECA2828 (135 aa).

4 consecutive transmembrane segments (helical) span residues 5-25 (FIVC…LLAG), 30-50 (ALLP…FTLL), 63-83 (GCYL…VGVM), and 93-113 (FGPI…VVGF).

Belongs to the UPF0299 family.

The protein resides in the cell inner membrane. The chain is UPF0299 membrane protein ECA2828 from Pectobacterium atrosepticum (strain SCRI 1043 / ATCC BAA-672) (Erwinia carotovora subsp. atroseptica).